The following is a 452-amino-acid chain: Chaperone SurA (452 aa).

An N-terminal signal peptide occupies residues 1-28 (MKKTLRFAAVVSSLAASAALLVAAPAAA). PpiC domains are found at residues 186-288 (QQDL…RLVD) and 302-400 (IVQT…QVLN).

It localises to the periplasm. The catalysed reaction is [protein]-peptidylproline (omega=180) = [protein]-peptidylproline (omega=0). Chaperone involved in the correct folding and assembly of outer membrane proteins. Recognizes specific patterns of aromatic residues and the orientation of their side chains, which are found more frequently in integral outer membrane proteins. May act in both early periplasmic and late outer membrane-associated steps of protein maturation. This Burkholderia orbicola (strain AU 1054) protein is Chaperone SurA.